We begin with the raw amino-acid sequence, 224 residues long: Small ribosomal subunit protein uS13 (224 aa).

The segment covering 1-17 has biased composition (basic and acidic residues); sequence MSEKTDKTEKKQKKAEE. Disordered regions lie at residues 1–64 and 184–224; these read MSEK…AEEK and HERG…EDKK. Low complexity-rich tracts occupy residues 20–30 and 38–47; these read ETASAEAAPAK and AKPAEGAPAD. Over residues 210–224 the composition is skewed to basic and acidic residues; it reads KKGEQGGAAKKEDKK.

This sequence belongs to the universal ribosomal protein uS13 family. Part of the 30S ribosomal subunit. Forms a loose heterodimer with protein S19. Forms two bridges to the 50S subunit in the 70S ribosome.

Located at the top of the head of the 30S subunit, it contacts several helices of the 16S rRNA. In the 70S ribosome it contacts the 23S rRNA (bridge B1a) and protein L5 of the 50S subunit (bridge B1b), connecting the 2 subunits; these bridges are implicated in subunit movement. In Methanocella arvoryzae (strain DSM 22066 / NBRC 105507 / MRE50), this protein is Small ribosomal subunit protein uS13.